A 77-amino-acid polypeptide reads, in one-letter code: Large ribosomal subunit protein bL28 (77 aa).

The protein belongs to the bacterial ribosomal protein bL28 family.

The protein is Large ribosomal subunit protein bL28 of Laribacter hongkongensis (strain HLHK9).